The primary structure comprises 697 residues: Elongation factor G 2 (697 aa).

Residues 5–280 (SKYRNIGIFA…AVVDYLPAPN (276 aa)) enclose the tr-type G domain. Residues 14-21 (AHVDAGKT), 78-82 (DTPGH), and 132-135 (NKLD) contribute to the GTP site.

Belongs to the TRAFAC class translation factor GTPase superfamily. Classic translation factor GTPase family. EF-G/EF-2 subfamily.

It localises to the cytoplasm. Catalyzes the GTP-dependent ribosomal translocation step during translation elongation. During this step, the ribosome changes from the pre-translocational (PRE) to the post-translocational (POST) state as the newly formed A-site-bound peptidyl-tRNA and P-site-bound deacylated tRNA move to the P and E sites, respectively. Catalyzes the coordinated movement of the two tRNA molecules, the mRNA and conformational changes in the ribosome. This is Elongation factor G 2 from Shewanella sp. (strain MR-4).